The chain runs to 454 residues: MTLGQFGGLFCIYLIAVIFILTLTYQEFRRVKFNFNVLFSMLYLLTFYFGFPLTCMLVFQFGVAVVPVEYLLYAMLSATAFYGIYYVTYKTRLRQPRSQPRTPIFTMNRVETNLTWVLLALVAVGTVGIFFMQNGFLLFKLDSYSKIFSSDVSGVALKRFFYFFIPAMLVVYFLKQDMRAWFFFLASTVAFGILTYVIVGGTRANIIIAFSLFLFIGIVRGWITLWMLAAAGVFGIVGMFWLALKRYGLDVNGAEAFYTFLYLTRDTFSPWENLGLLLQNYDKIDFQGLAPIVRDFYVFIPSALWPERPDLVLNTANYFTWDVLDNHSGLAISPTLIGSLVVMGGVLFIPLGAIVVGLIIKWFDWLYEQGKAESNRYKAAILQSFCFGAVFNIIVLAREGLDSFVSRVVFFCVIFGACLVLAKLLYWLFDTAGLIKRQGIKSNRLSMPNAGNQL.

11 helical membrane-spanning segments follow: residues 3-23, 39-59, 61-81, 119-139, 154-174, 180-200, 201-221, 222-242, 340-360, 377-397, and 409-429; these read LGQF…ILTL, FSML…MLVF, FGVA…ATAF, LALV…FLLF, GVAL…VYFL, AWFF…VIVG, GTRA…IVRG, WITL…MFWL, LVVM…GLII, YKAA…IVLA, and VFFC…YWLF.

The protein belongs to the WzyE family. As to quaternary structure, probably part of a complex composed of WzxE, WzyE and WzzE.

It localises to the cell inner membrane. It participates in bacterial outer membrane biogenesis; enterobacterial common antigen biosynthesis. In terms of biological role, probably involved in the polymerization of enterobacterial common antigen (ECA) trisaccharide repeat units. This chain is Probable ECA polymerase, found in Yersinia pseudotuberculosis serotype O:1b (strain IP 31758).